The chain runs to 337 residues: Trace amine-associated receptor 5 (337 aa).

The Extracellular portion of the chain corresponds to 1–34; sequence MRAVFIQGAEEHPAAFCYQVNGSCPRTVHTLGIQ. N-linked (GlcNAc...) asparagine glycosylation is present at Asn21. 2 cysteine pairs are disulfide-bonded: Cys24–Cys188 and Cys99–Cys192. The chain crosses the membrane as a helical span at residues 35–55; sequence LVIYLACAAGMLIIVLGNVFV. The Cytoplasmic portion of the chain corresponds to 56-70; the sequence is AFAVSYFKALHTPTN. Residues 71-91 traverse the membrane as a helical segment; the sequence is FLLLSLALADMFLGLLVLPLS. Residues 92–109 are Extracellular-facing; it reads TIRSVESCWFFGDFLCRL. A helical membrane pass occupies residues 110 to 130; it reads HTYLDTLFCLTSIFHLCFISI. The Cytoplasmic segment spans residues 131–154; sequence DRHCAICDPLLYPSKFTVRVALRY. The chain crosses the membrane as a helical span at residues 155-175; sequence ILAGWGVPAAYTSLFLYTDVV. Residues 176–189 form an extracellular Loop 2 (ECL2) region; it reads ETRLSQWLEEMPCV. Over 176–204 the chain is Extracellular; the sequence is ETRLSQWLEEMPCVGSCQLLLNKFWGWLN. The helical transmembrane segment at 205 to 225 threads the bilayer; that stretch reads FPLFFVPCLIMISLYVKIFVV. At 226–253 the chain is on the cytoplasmic side; it reads ATRQAQQITTLSKSLAGAAKHERKAAKT. The chain crosses the membrane as a helical span at residues 254–274; sequence LGIAVGIYLLCWLPFTIDTMV. The Extracellular segment spans residues 275-284; it reads DSLLHFITPP. The chain crosses the membrane as a helical span at residues 285–307; it reads LVFDIFIWFAYFNSACNPIIYVF. The Cytoplasmic segment spans residues 308–337; the sequence is SYQWFRKALKLTLSQKVFSPQTRTVDLYQE.

The protein belongs to the G-protein coupled receptor 1 family. As to expression, expressed almost exclusively in skeletal muscle and selected areas of the brain, such amygdala, hippocampus, caudate nucleus, thalamus and hypothalamus. Weak expression is also find in substantia nigra.

It is found in the cell membrane. Functionally, olfactory receptor specific for trimethylamine, a trace amine. Also activated at lower level by dimethylethylamine. Trimethylamine is a bacterial metabolite found in some animal odors, and to humans it is a repulsive odor associated with bad breath and spoiled food. Trimethylamine-binding causes a conformation change that triggers signaling via G(s)-class of G alpha proteins (GNAL or GNAS). This Homo sapiens (Human) protein is Trace amine-associated receptor 5.